The following is a 106-amino-acid chain: UPF0060 membrane protein Mrad2831_0929 (106 aa).

4 consecutive transmembrane segments (helical) span residues 3–23 (LLAYAAAALAEIAGCFAFWAW), 30–50 (AWWTLPGLASLAAFAALLTLV), 59–79 (FAAYGGVYVAASVLWLWLAEG), and 87–104 (LAGSAVCLAGTALILLGR).

Belongs to the UPF0060 family.

It localises to the cell inner membrane. This is UPF0060 membrane protein Mrad2831_0929 from Methylobacterium radiotolerans (strain ATCC 27329 / DSM 1819 / JCM 2831 / NBRC 15690 / NCIMB 10815 / 0-1).